Consider the following 787-residue polypeptide: Pyridoxal-dependent decarboxylase domain-containing protein 1 (787 aa).

Positions Glu29–Lys41 are enriched in basic and acidic residues. A disordered region spans residues Glu29–Leu52. The residue at position 653 (Ser653) is a Phosphoserine. The disordered stretch occupies residues Gln683–Arg787. Residues Ser685–Arg697 show a composition bias toward polar residues. Phosphothreonine is present on residues Thr688 and Thr692. Ser711, Ser719, and Ser723 each carry phosphoserine. Polar residues predominate over residues Gln735–Ala745. A phosphoserine mark is found at Ser747 and Ser785. Basic and acidic residues predominate over residues Gln774–Arg787.

This sequence belongs to the group II decarboxylase family. Pyridoxal 5'-phosphate is required as a cofactor.

The sequence is that of Pyridoxal-dependent decarboxylase domain-containing protein 1 (PDXDC1) from Bos taurus (Bovine).